Here is an 810-residue protein sequence, read N- to C-terminus: Plasminogen (810 aa).

An N-terminal signal peptide occupies residues 1–19 (MQRKELVLLFLLFLQPGHG). The PAN domain occupies 20–98 (IPLDDYVTTQ…RDVILFEKKM (79 aa)). 24 disulfide bridges follow: Cys49/Cys73, Cys53/Cys61, Cys103/Cys181, Cys124/Cys164, Cys152/Cys176, Cys185/Cys262, Cys188/Cys316, Cys206/Cys245, Cys234/Cys257, Cys275/Cys352, Cys296/Cys335, Cys324/Cys347, Cys379/Cys456, Cys400/Cys439, Cys428/Cys451, Cys482/Cys561, Cys503/Cys544, Cys532/Cys556, Cys569/Cys685, Cys579/Cys586, Cys607/Cys623, Cys699/Cys766, Cys729/Cys745, and Cys756/Cys784. 5 Kringle domains span residues 103–181 (CKVG…IIQC), 185–262 (CMHC…IPRC), 275–352 (CLMG…IPDC), 379–456 (CYQG…LKKC), and 482–561 (CIID…IPHC). Asn339 is a glycosylation site (N-linked (GlcNAc...) asparagine). Positions 398 to 418 (KKCQPWTSMRPHRHSKTPENY) are disordered. Residues 582–808 (RVGGCVAHPH…YVSWLQDVMR (227 aa)) form the Peptidase S1 domain. Ser598 carries the post-translational modification Phosphoserine. Catalysis depends on charge relay system residues His622 and Asp665. Ser760 acts as the Charge relay system in catalysis.

Belongs to the peptidase S1 family. Plasminogen subfamily. In terms of assembly, interacts with CSPG4 and AMOT. Interacts (via the Kringle domains) with HRG; the interaction tethers PLG to the cell surface and enhances its activation. Interacts (via Kringle 4 domain) with ADA; the interaction stimulates PLG activation when in complex with DPP4. Angiostatin: Interacts with ATP5F1A; the interaction inhibits most of the angiogenic effects of angiostatin. Post-translationally, in the presence of the inhibitor, the activation involves only cleavage after Arg-582, yielding two chains held together by two disulfide bonds. In the absence of the inhibitor, the activation involves additionally the removal of the activation peptide.

Its subcellular location is the secreted. It carries out the reaction Preferential cleavage: Lys-|-Xaa &gt; Arg-|-Xaa, higher selectivity than trypsin. Converts fibrin into soluble products.. With respect to regulation, converted into plasmin by plasminogen activators, both plasminogen and its activator being bound to fibrin. Cannot be activated with streptokinase. Its function is as follows. Plasmin dissolves the fibrin of blood clots and acts as a proteolytic factor in a variety of other processes including embryonic development, tissue remodeling, tumor invasion, and inflammation. In ovulation, weakens the walls of the Graafian follicle. It activates the urokinase-type plasminogen activator, collagenases and several complement zymogens, such as C1, C4 and C5. Cleavage of fibronectin and laminin leads to cell detachment and apoptosis. Also cleaves fibrin, thrombospondin and von Willebrand factor. Its role in tissue remodeling and tumor invasion may be modulated by CSPG4. Binds to cells. The polypeptide is Plasminogen (PLG) (Erinaceus europaeus (Western European hedgehog)).